Reading from the N-terminus, the 493-residue chain is Leucine-rich repeat-containing protein 14 (493 aa).

Residues 111–146 (KHTLRVLDMTGLLDDGVEQDPGTMSMWDCTAAVART) form an LRR 1; degenerate repeat. An LRR 2; degenerate repeat occupies 194–218 (RLCCRDLRAEDLPMRNTVALLQLLD). Residues 219 to 246 (AGCLRRIDLRFNNLGLRGLSVIIPHVAR) form an LRR 3; degenerate repeat. An LRR 4; degenerate repeat occupies 247–282 (FQHLASLRLHYVHGDSRQPSVDGEDNFRYFLAQMGR). LRR repeat units lie at residues 283 to 307 (FICLRELSIGSSLLSGRLDQLLSTL), 308 to 339 (QRPLESLELAFCALLPEDLRFLAQSSHAAHLK), 340 to 360 (KLDLSGNDLSGNQLTPFQGLL), 364 to 391 (AATLLHLELTECQIADAQLLATLPTLTR), and 392 to 416 (CASLRYLGLYGNPLSMAGLKELLRD).

The protein belongs to the PRAME family. LRRC14 subfamily. As to quaternary structure, interacts with IKBKB; disrupts IKBKB-IKBKG interaction preventing I-kappa-B-kinase (IKK) core complex formation and leading to a decrease of IKBKB phosphorylation and NF-kappaB activation. Interacts with CHUK.

The protein localises to the cytoplasm. In terms of biological role, negatively regulates Toll-like receptor-mediated NF-kappa-B signaling by disrupting IKK core complex formation through interaction with IKBKB. In Rattus norvegicus (Rat), this protein is Leucine-rich repeat-containing protein 14.